A 314-amino-acid polypeptide reads, in one-letter code: MCPTLNNIVSSLQRNGIFINSLIAALTIGGQQLFSSSTFSCPCQVGKNFYYGSAFLVIPALILLVAGFALRSQMWTITGEYCCSCAPPYRRISPLECKLACLRFFSITGRAVIAPLTWLAVTLLTGTYYECAASEFASVDHYPMFDNVSASKREEILAGFPCCRSAPSDVILVRDEIALLHRYQSQMLGWILITLATIAALVSCCVAKCCSPLTSLQHCYWTSHLQNERELFEQAAEQHSRLLMMHRIKKLFGFIPGSEDVKHIRIPSCQDWKDISVPTLLCMGDDLQGHYSFLGNRVDEDNEEDRSRGIELKP.

Over 1–14 the chain is Cytoplasmic; sequence MCPTLNNIVSSLQR. Residues 15 to 37 traverse the membrane as a helical segment; that stretch reads NGIFINSLIAALTIGGQQLFSSS. At 38-48 the chain is on the extracellular side; the sequence is TFSCPCQVGKN. Cystine bridges form between cysteine 41-cysteine 131 and cysteine 43-cysteine 162. A helical membrane pass occupies residues 49–71; sequence FYYGSAFLVIPALILLVAGFALR. At 72 to 103 the chain is on the cytoplasmic side; sequence SQMWTITGEYCCSCAPPYRRISPLECKLACLR. The helical transmembrane segment at 104–129 threads the bilayer; it reads FFSITGRAVIAPLTWLAVTLLTGTYY. The Extracellular portion of the chain corresponds to 130-183; that stretch reads ECAASEFASVDHYPMFDNVSASKREEILAGFPCCRSAPSDVILVRDEIALLHRY. Residues 184–207 traverse the membrane as a helical segment; the sequence is QSQMLGWILITLATIAALVSCCVA. Residues 208 to 314 lie on the Cytoplasmic side of the membrane; that stretch reads KCCSPLTSLQ…DRSRGIELKP (107 aa).

Belongs to the CALHM family. In terms of assembly, oligomerizes to form decameric and undecameric channels. Two hemichannels can assemble in a tail-to-tail manner to form a gap junction. In terms of tissue distribution, placenta.

The protein localises to the cell membrane. In terms of biological role, may assemble to form gap junction channel-like structures involved in intercellular communication. Channel gating and ion conductance are likely regulated by membrane lipids rather than by membrane depolarization or extracellular calcium levels. The sequence is that of Calcium homeostasis modulator protein 4 from Homo sapiens (Human).